A 226-amino-acid chain; its full sequence is PKHD-type hydroxylase PLES_48951 (226 aa).

In terms of domain architecture, Fe2OG dioxygenase spans 78–178 (KVFPPLFNCY…RYASFFWTQS (101 aa)). Residues His-96, Asp-98, and His-159 each contribute to the Fe cation site. Arg-169 is a binding site for 2-oxoglutarate.

It depends on Fe(2+) as a cofactor. L-ascorbate serves as cofactor.

This chain is PKHD-type hydroxylase PLES_48951, found in Pseudomonas aeruginosa (strain LESB58).